The chain runs to 209 residues: GTP cyclohydrolase 1 (209 aa).

Positions 89, 92, and 163 each coordinate Zn(2+).

It belongs to the GTP cyclohydrolase I family. In terms of assembly, toroid-shaped homodecamer, composed of two pentamers of five dimers.

The catalysed reaction is GTP + H2O = 7,8-dihydroneopterin 3'-triphosphate + formate + H(+). It functions in the pathway cofactor biosynthesis; 7,8-dihydroneopterin triphosphate biosynthesis; 7,8-dihydroneopterin triphosphate from GTP: step 1/1. The chain is GTP cyclohydrolase 1 from Sulfolobus acidocaldarius (strain ATCC 33909 / DSM 639 / JCM 8929 / NBRC 15157 / NCIMB 11770).